A 31-amino-acid chain; its full sequence is Cytochrome b6-f complex subunit 6 (31 aa).

A helical transmembrane segment spans residues 4-24 (ITSYFGFLLVVLTITSALFIG).

Belongs to the PetL family. As to quaternary structure, the 4 large subunits of the cytochrome b6-f complex are cytochrome b6, subunit IV (17 kDa polypeptide, PetD), cytochrome f and the Rieske protein, while the 4 small subunits are PetG, PetL, PetM and PetN. The complex functions as a dimer.

It localises to the plastid. The protein localises to the chloroplast thylakoid membrane. Component of the cytochrome b6-f complex, which mediates electron transfer between photosystem II (PSII) and photosystem I (PSI), cyclic electron flow around PSI, and state transitions. PetL is important for photoautotrophic growth as well as for electron transfer efficiency and stability of the cytochrome b6-f complex. The polypeptide is Cytochrome b6-f complex subunit 6 (Jasminum nudiflorum (Winter jasmine)).